A 174-amino-acid chain; its full sequence is Protein C2-DOMAIN ABA-RELATED 6 (174 aa).

The 115-residue stretch at 1–115 (MEKTEEEVEM…HKLGLKELPH (115 aa)) folds into the C2 domain. Residues Arg-30, Asp-31, Asp-36, Asp-82, Lys-83, Asp-84, and Asp-90 each coordinate Ca(2+).

This sequence belongs to the plant CAR protein family. In terms of assembly, binds to PYR/PYL/RCAR abscisic acid intracellular receptors in an ABA-independent manner, both at the plasma membrane and in the nucleus. Subunit of a complex made of CAR6, PHOT1 and RPT3/NPH3. Interacts directly with RPT3/NPH3.

It localises to the cell membrane. The protein resides in the nucleus. Stimulates the GTPase/ATPase activities of Obg-like ATPases. Mediates the transient calcium-dependent interaction of PYR/PYL/RCAR abscisic acid (ABA) receptors with the plasma membrane and thus regulates ABA sensitivity. Prevents hypocotyl bending as well as gravitropic response under blue light conditions. This Arabidopsis thaliana (Mouse-ear cress) protein is Protein C2-DOMAIN ABA-RELATED 6.